We begin with the raw amino-acid sequence, 431 residues long: Glutamyl-tRNA(Gln) amidotransferase subunit A (431 aa).

Residues Lys55 and Ser130 each act as charge relay system in the active site. Ser154 serves as the catalytic Acyl-ester intermediate.

It belongs to the amidase family. GatA subfamily. As to quaternary structure, heterotrimer of A, B and C subunits.

It carries out the reaction L-glutamyl-tRNA(Gln) + L-glutamine + ATP + H2O = L-glutaminyl-tRNA(Gln) + L-glutamate + ADP + phosphate + H(+). Functionally, allows the formation of correctly charged Gln-tRNA(Gln) through the transamidation of misacylated Glu-tRNA(Gln) in organisms which lack glutaminyl-tRNA synthetase. The reaction takes place in the presence of glutamine and ATP through an activated gamma-phospho-Glu-tRNA(Gln). In Methanococcus maripaludis (strain C6 / ATCC BAA-1332), this protein is Glutamyl-tRNA(Gln) amidotransferase subunit A.